A 329-amino-acid chain; its full sequence is Diaminopimelate epimerase (329 aa).

The substrate site is built by N14 and N73. The active-site Proton donor is C82. Residues 83–84 (GN), N170, N206, and 224–225 (ER) contribute to the substrate site. C233 acts as the Proton acceptor in catalysis. Residue 234 to 235 (GT) participates in substrate binding.

This sequence belongs to the diaminopimelate epimerase family. Homodimer.

It localises to the cytoplasm. The catalysed reaction is (2S,6S)-2,6-diaminopimelate = meso-2,6-diaminopimelate. It functions in the pathway amino-acid biosynthesis; L-lysine biosynthesis via DAP pathway; DL-2,6-diaminopimelate from LL-2,6-diaminopimelate: step 1/1. Its function is as follows. Catalyzes the stereoinversion of LL-2,6-diaminopimelate (L,L-DAP) to meso-diaminopimelate (meso-DAP), a precursor of L-lysine and an essential component of the bacterial peptidoglycan. The sequence is that of Diaminopimelate epimerase from Listeria innocua serovar 6a (strain ATCC BAA-680 / CLIP 11262).